The primary structure comprises 317 residues: Lysosomal-associated transmembrane protein 4B (317 aa).

The disordered stretch occupies residues 25-73; sequence AFGAKGTDPAEARSSRGIEEAGPRAHGRAGREPERRRSRQQRRGGLQAR. A compositionally biased stretch (basic and acidic residues) spans 32-59; it reads DPAEARSSRGIEEAGPRAHGRAGREPER. 4 helical membrane passes run 117–137, 163–183, 191–211, and 244–264; these read ILLGVWYLIINAVVLLILLSA, MCIAIAISLLMILICAMATYG, WIIPFFCYQIFDFALNMLVAI, and CLVLIILLFISIILTFKGYLI. The tract at residues 205 to 221 is required for NEDD4 interaction; it reads LNMLVAITVLIYPNSIQ.

It belongs to the LAPTM4/LAPTM5 transporter family. Homooligomer; upon reaching the lysosomes. Interacts with MCOLN1. Interacts with NEDD4; may play a role in the lysosomal sorting of LAPTM4B; enhances HGS association with NEDD4; mediates inhibition of EGFR degradation. Interacts with PIP5K1C; promotes SNX5 association with LAPTM4B; kinase activity of PIP5K1C is required; interaction is regulated by phosphatidylinositol 4,5-bisphosphate generated by PIP5K1C. Interacts with HGS; promotes HGS ubiquitination. Interacts with SNX5. Interacts with SLC3A2 and SLC7A5; recruits SLC3A2 and SLC7A5 to lysosomes to promote leucine uptake into these organelles and is required for mTORC1 activation. Interacts with LRRC32; decreases TGFB1 production in regulatory T cells. Interacts with BECN1; competes with EGFR for LAPTM4B binding; regulates EGFR activity. Interacts with EGFR; positively correlates with EGFR activation. Undergoes proteolytic cleavage following delivery to the lysosomes. Post-translationally, ubiquitinated by NEDD4.

It is found in the endomembrane system. It localises to the late endosome membrane. The protein localises to the cell membrane. Its subcellular location is the cell projection. The protein resides in the lysosome membrane. It is found in the endosome membrane. It localises to the endosome. The protein localises to the multivesicular body membrane. Its subcellular location is the multivesicular body lumen. In terms of biological role, required for optimal lysosomal function. Blocks EGF-stimulated EGFR intraluminal sorting and degradation. Conversely by binding with the phosphatidylinositol 4,5-bisphosphate, regulates its PIP5K1C interaction, inhibits HGS ubiquitination and relieves LAPTM4B inhibition of EGFR degradation. Recruits SLC3A2 and SLC7A5 (the Leu transporter) to the lysosome, promoting entry of leucine and other essential amino acid (EAA) into the lysosome, stimulating activation of proton-transporting vacuolar (V)-ATPase protein pump (V-ATPase) and hence mTORC1 activation. Plays a role as negative regulator of TGFB1 production in regulatory T cells. Binds ceramide and facilitates its exit from late endosome in order to control cell death pathways. The sequence is that of Lysosomal-associated transmembrane protein 4B from Homo sapiens (Human).